The chain runs to 210 residues: Chaperone protein TorD (210 aa).

It belongs to the TorD/DmsD family. TorD subfamily.

The protein localises to the cytoplasm. Its function is as follows. Involved in the biogenesis of TorA. Acts on TorA before the insertion of the molybdenum cofactor and, as a result, probably favors a conformation of the apoenzyme that is competent for acquiring the cofactor. This is Chaperone protein TorD from Salmonella schwarzengrund (strain CVM19633).